The primary structure comprises 182 residues: Bifunctional protein PyrR (182 aa).

Residues 99–111 carry the PRPP-binding motif; it reads IVLVDDVLFTGRT.

It belongs to the purine/pyrimidine phosphoribosyltransferase family. PyrR subfamily. Homodimer and homohexamer; in equilibrium.

The enzyme catalyses UMP + diphosphate = 5-phospho-alpha-D-ribose 1-diphosphate + uracil. Regulates transcriptional attenuation of the pyrimidine nucleotide (pyr) operon by binding in a uridine-dependent manner to specific sites on pyr mRNA. This disrupts an antiterminator hairpin in the RNA and favors formation of a downstream transcription terminator, leading to a reduced expression of downstream genes. In terms of biological role, also displays a weak uracil phosphoribosyltransferase activity which is not physiologically significant. The chain is Bifunctional protein PyrR from Caldicellulosiruptor bescii (strain ATCC BAA-1888 / DSM 6725 / KCTC 15123 / Z-1320) (Anaerocellum thermophilum).